The sequence spans 289 residues: CRISPR system Cms protein Csm4 (289 aa).

It belongs to the CRISPR-associated Csm4 family. As to quaternary structure, probably part of the Csm effector complex, that includes Cas10, Csm2, Csm3, Csm4, Csm5 and mature crRNA. Interacts with Cas10 (csm1).

Functionally, CRISPR (clustered regularly interspaced short palindromic repeat) is an adaptive immune system that provides protection against mobile genetic elements (viruses, transposable elements and conjugative plasmids). CRISPR clusters contain spacers, sequences complementary to antecedent mobile elements, and target invading nucleic acids. CRISPR clusters are transcribed and processed into CRISPR RNA (crRNA). The type III-A Csm effector complex binds crRNA and acts as a crRNA-guided RNase, DNase and cyclic oligoadenylate synthase; binding of target RNA cognate to the crRNA is required for all activities. The subunit probably binds to the 5' handle of the crRNA, helping in discrimination between self- and non-self. The protein is CRISPR system Cms protein Csm4 of Thermococcus onnurineus (strain NA1).